Here is a 132-residue protein sequence, read N- to C-terminus: Fumarate reductase subunit C (132 aa).

3 consecutive transmembrane segments (helical) span residues 30–50 (ATSV…LCFA), 70–90 (IVVF…VTYF), and 110–130 (VVRN…LVLV).

It belongs to the FrdC family. As to quaternary structure, part of an enzyme complex containing four subunits: a flavoprotein (FrdA), an iron-sulfur protein (FrdB), and two hydrophobic anchor proteins (FrdC and FrdD).

The protein resides in the cell inner membrane. Anchors the catalytic components of the fumarate reductase complex to the cell membrane, binds quinones. The chain is Fumarate reductase subunit C from Haemophilus influenzae (strain ATCC 51907 / DSM 11121 / KW20 / Rd).